Here is a 323-residue protein sequence, read N- to C-terminus: Aspartate carbamoyltransferase catalytic subunit (323 aa).

Positions 71 and 72 each coordinate carbamoyl phosphate. An L-aspartate-binding site is contributed by K99. The carbamoyl phosphate site is built by R121, H151, and Q154. Residues R184 and R239 each coordinate L-aspartate. Carbamoyl phosphate contacts are provided by G280 and P281.

The protein belongs to the aspartate/ornithine carbamoyltransferase superfamily. ATCase family. In terms of assembly, heterododecamer (2C3:3R2) of six catalytic PyrB chains organized as two trimers (C3), and six regulatory PyrI chains organized as three dimers (R2).

It catalyses the reaction carbamoyl phosphate + L-aspartate = N-carbamoyl-L-aspartate + phosphate + H(+). It functions in the pathway pyrimidine metabolism; UMP biosynthesis via de novo pathway; (S)-dihydroorotate from bicarbonate: step 2/3. Functionally, catalyzes the condensation of carbamoyl phosphate and aspartate to form carbamoyl aspartate and inorganic phosphate, the committed step in the de novo pyrimidine nucleotide biosynthesis pathway. The polypeptide is Aspartate carbamoyltransferase catalytic subunit (Cupriavidus pinatubonensis (strain JMP 134 / LMG 1197) (Cupriavidus necator (strain JMP 134))).